The chain runs to 376 residues: Lipoprotein p33 (376 aa).

Residues 1 to 30 form the signal peptide; sequence MKIKKIKLLKALALTGAFGIVATVPVIVYS. Cysteine 31 is lipidated: N-palmitoyl cysteine. The S-diacylglycerol cysteine moiety is linked to residue cysteine 31. A disordered region spans residues 35–59; it reads DNNGGTGDNNTGGGGSGTDQQQGTT. Over residues 38–51 the composition is skewed to gly residues; it reads GGTGDNNTGGGGSG.

The protein belongs to the p35 lipoprotein family.

It localises to the cell membrane. The polypeptide is Lipoprotein p33 (Malacoplasma penetrans (Mycoplasma penetrans)).